Consider the following 310-residue polypeptide: MYEIKQPFHSGYLQVSEIHQIYWEESGNPDGVPVIFLHGGPGAGASPECRGFFNPDVFRIVIIDQRGCGRSRPYACAEDNTTWDLVADIEKVREMLGIGKWLVFGGSWGSTLSLAYAQTHPERVKGLVLRGIFLCRPSETVWLNEAGGVSRIYPEQWQKFVAPIAENRRNRLIEAYHGLLFHQDEEVCLSAAKAWADWESYLIRFEPEEVDEDAYASLAIARLENHYFVNGGWLQGDRAILNNIGKIRHIPTIIVQGRYDLCTPMQSAWALSKAFPEAELRVVQAGHRAFDPPLVDALVQAVEDILPHLL.

The region spanning 33–290 is the AB hydrolase-1 domain; the sequence is PVIFLHGGPG…RVVQAGHRAF (258 aa). S107 acts as the Nucleophile in catalysis. The active site involves D260. The active-site Proton donor is the H287.

It belongs to the peptidase S33 family.

The protein resides in the cytoplasm. It catalyses the reaction Release of N-terminal proline from a peptide.. Specifically catalyzes the removal of N-terminal proline residues from peptides. In Neisseria meningitidis serogroup B (strain ATCC BAA-335 / MC58), this protein is Proline iminopeptidase (pip).